Consider the following 689-residue polypeptide: Transketolase (689 aa).

H56 provides a ligand contact to substrate. Thiamine diphosphate-binding positions include H96 and 144–146 (GNL). D185 serves as a coordination point for Mg(2+). Thiamine diphosphate is bound by residues G186 and N215. N215 and I217 together coordinate Mg(2+). Residues H289, R380, and S407 each coordinate substrate. H289 lines the thiamine diphosphate pocket. The Proton donor role is filled by E434. F460 is a binding site for thiamine diphosphate. The substrate site is built by H484, D492, and R543.

Belongs to the transketolase family. In terms of assembly, homodimer. Requires Mg(2+) as cofactor. Ca(2+) serves as cofactor. The cofactor is Mn(2+). It depends on Co(2+) as a cofactor. Thiamine diphosphate is required as a cofactor.

The enzyme catalyses D-sedoheptulose 7-phosphate + D-glyceraldehyde 3-phosphate = aldehydo-D-ribose 5-phosphate + D-xylulose 5-phosphate. Functionally, catalyzes the transfer of a two-carbon ketol group from a ketose donor to an aldose acceptor, via a covalent intermediate with the cofactor thiamine pyrophosphate. This is Transketolase (tkt) from Aquifex aeolicus (strain VF5).